Here is a 107-residue protein sequence, read N- to C-terminus: Protein phosphatase 1 regulatory subunit INH3 (107 aa).

The segment covering methionine 1 to serine 14 has biased composition (low complexity). Disordered regions lie at residues methionine 1–lysine 40 and proline 69–aspartate 107. Over residues aspartate 71–aspartate 80 the composition is skewed to acidic residues. The segment covering asparagine 81–serine 94 has biased composition (basic and acidic residues). Residues glycine 95–aspartate 107 are compositionally biased toward low complexity.

Interacts with protein phosphatase 1. In terms of tissue distribution, expressed in roots, cotyledons, leaves, flowers and embryos.

Inhibitor of protein-phosphatase 1 (PP1). Binds to and inhibits PP1 activity. Required for early embryogenesis progression. The protein is Protein phosphatase 1 regulatory subunit INH3 of Arabidopsis thaliana (Mouse-ear cress).